Here is a 178-residue protein sequence, read N- to C-terminus: Large ribosomal subunit protein uL6 (178 aa).

Belongs to the universal ribosomal protein uL6 family. As to quaternary structure, part of the 50S ribosomal subunit.

In terms of biological role, this protein binds to the 23S rRNA, and is important in its secondary structure. It is located near the subunit interface in the base of the L7/L12 stalk, and near the tRNA binding site of the peptidyltransferase center. The polypeptide is Large ribosomal subunit protein uL6 (Coxiella burnetii (strain CbuG_Q212) (Coxiella burnetii (strain Q212))).